The primary structure comprises 94 residues: Protein LURE 1.1 (94 aa).

The N-terminal stretch at 1–19 (MKLIFIFLTLLIFVSSCTS) is a signal peptide. Cystine bridges form between cysteine 58/cysteine 75, cysteine 61/cysteine 82, and cysteine 65/cysteine 84. The segment at 67–87 (RRDRYIRTCSFERKLCRCSYS) is PRK6 binding.

Belongs to the DEFL family. In terms of assembly, binds to PRK6 LRRs. In terms of tissue distribution, expressed in the pistil. Detected exclusively in the synergid cells.

It localises to the secreted. Functionally, pollen tube attractants guiding pollen tubes to the ovular micropyle. The sequence is that of Protein LURE 1.1 from Arabidopsis thaliana (Mouse-ear cress).